The sequence spans 431 residues: Glutamate-1-semialdehyde 2,1-aminomutase (431 aa).

The residue at position 269 (Lys269) is an N6-(pyridoxal phosphate)lysine.

Belongs to the class-III pyridoxal-phosphate-dependent aminotransferase family. HemL subfamily. Homodimer. The cofactor is pyridoxal 5'-phosphate.

The protein resides in the cytoplasm. The enzyme catalyses (S)-4-amino-5-oxopentanoate = 5-aminolevulinate. It participates in porphyrin-containing compound metabolism; protoporphyrin-IX biosynthesis; 5-aminolevulinate from L-glutamyl-tRNA(Glu): step 2/2. In Francisella tularensis subsp. tularensis (strain WY96-3418), this protein is Glutamate-1-semialdehyde 2,1-aminomutase.